A 115-amino-acid chain; its full sequence is MKVTDVRMRKLVTDSRMKALASITLDEAFVIHDLRVIDGNNGLFVAMPSKRTSDGEFRDIAHPINSEMRQEIQEAVMKVYDETEAVEPGTIATSEVSSQLEESDSDKTLSEDLKA.

Positions 88 to 115 (PGTIATSEVSSQLEESDSDKTLSEDLKA) are disordered. Residues 91-100 (IATSEVSSQL) are compositionally biased toward polar residues. The segment covering 105–115 (SDKTLSEDLKA) has biased composition (basic and acidic residues).

The protein belongs to the SpoVG family.

Its function is as follows. Could be involved in septation. The sequence is that of Putative septation protein SpoVG from Macrococcus caseolyticus (strain JCSC5402) (Macrococcoides caseolyticum).